The following is a 174-amino-acid chain: Phytochrome-interacting ankyrin-repeat protein 2 (174 aa).

Residues 1 to 13 (MLQEPSAAFSLRR) are compositionally biased toward low complexity. Residues 1–29 (MLQEPSAAFSLRRNSFRRRSPRSNVDDRG) are disordered. At serine 15 the chain carries Phosphoserine. 3 ANK repeats span residues 28–57 (RGWNPLHIKARKGDLKSVKQLLDQGMDVNA), 65–94 (KGVSALHLAAEGGHIEVMDLLLERGANIDA), and 100–129 (CGWTPLHAAAKERKREAVKFLVENGAFLAD).

In terms of assembly, interacts with phytochrome A (PHYA), both in Pr and Pfr forms. Binds to PIF3, a repressor of photomorphogenesis in response to phytochrome-mediated light signaling; this interaction may trigger the repression of PHYA-mediated PIF3 phosphorylation. Interacts with SIGE/SIG5 in mitochondrion. Interacts with RPS9M (via C terminus). Phosphorylated by PHYA. Mostly expressed in flowers, cotyledons, leaves and siliques, and, to a lower extent, in roots and stems. Also detected at low levels in seedlings grown in continuous dark or light conditions. Expressed in male and female gametophytes.

Its subcellular location is the cytoplasm. It localises to the nucleus. It is found in the mitochondrion. In terms of biological role, promotes anthocyanin accumulation through interaction with PHYA, especially in response to far-red light, high light and sucrose treatment, probably by triggering A3G2XYLT/UF3GT expression. Required for gametophytes development as well as male-female gamete recognition during fertilization, possibly by regulating mitochondrial gene expression. Represses PHYA-mediated PIF3 phosphorylation. The polypeptide is Phytochrome-interacting ankyrin-repeat protein 2 (Arabidopsis thaliana (Mouse-ear cress)).